A 272-amino-acid chain; its full sequence is Ribosomal RNA small subunit methyltransferase A (272 aa).

Asn18, Leu20, Gly45, Glu66, Asp91, and Asn113 together coordinate S-adenosyl-L-methionine.

Belongs to the class I-like SAM-binding methyltransferase superfamily. rRNA adenine N(6)-methyltransferase family. RsmA subfamily.

The protein resides in the cytoplasm. It carries out the reaction adenosine(1518)/adenosine(1519) in 16S rRNA + 4 S-adenosyl-L-methionine = N(6)-dimethyladenosine(1518)/N(6)-dimethyladenosine(1519) in 16S rRNA + 4 S-adenosyl-L-homocysteine + 4 H(+). In terms of biological role, specifically dimethylates two adjacent adenosines (A1518 and A1519) in the loop of a conserved hairpin near the 3'-end of 16S rRNA in the 30S particle. May play a critical role in biogenesis of 30S subunits. The polypeptide is Ribosomal RNA small subunit methyltransferase A (Proteus mirabilis (strain HI4320)).